The following is a 401-amino-acid chain: Elongation factor Tu 1 (401 aa).

In terms of domain architecture, tr-type G spans 10-209 (KPHVNVGTIG…AVDEYIPTPV (200 aa)). The G1 stretch occupies residues 19-26 (GHVDHGKT). 19–26 (GHVDHGKT) lines the GTP pocket. Position 26 (Thr-26) interacts with Mg(2+). Positions 60–64 (GITIA) are G2. The segment at 81–84 (DCPG) is G3. Residues 81-85 (DCPGH) and 136-139 (NKVD) each bind GTP. Residues 136 to 139 (NKVD) are G4. The segment at 174 to 176 (SAL) is G5.

The protein belongs to the TRAFAC class translation factor GTPase superfamily. Classic translation factor GTPase family. EF-Tu/EF-1A subfamily. Monomer.

The protein resides in the cytoplasm. It carries out the reaction GTP + H2O = GDP + phosphate + H(+). Its function is as follows. GTP hydrolase that promotes the GTP-dependent binding of aminoacyl-tRNA to the A-site of ribosomes during protein biosynthesis. The protein is Elongation factor Tu 1 of Roseiflexus castenholzii (strain DSM 13941 / HLO8).